We begin with the raw amino-acid sequence, 101 residues long: Movement protein (101 aa).

A helical transmembrane segment spans residues E30 to L50.

This sequence belongs to the mastrevirus movement protein family. As to quaternary structure, interacts with the capsid protein (CP). Part of a MP-CP-viral DNA complex.

It localises to the host membrane. Involved in the viral transport within, and between cells. The sequence is that of Movement protein from Maize streak virus genotype D (isolate Raw) (MSV).